The chain runs to 442 residues: Glycolipid 2-alpha-mannosyltransferase (442 aa).

Over 1 to 11 (MALFLSKRLLR) the chain is Cytoplasmic. The chain crosses the membrane as a helical; Signal-anchor for type II membrane protein span at residues 12–30 (FTVIAGAVIVLLLTLNSNS). The tract at residues 31 to 118 (RTQQYIPSSI…YITPSFANKA (88 aa)) is stem region. The Lumenal portion of the chain corresponds to 31-442 (RTQQYIPSSI…KPKNWKKFRE (412 aa)). The disordered stretch occupies residues 68-95 (EQSALNSEASEDSEAMDEESKALKAAAE). Over residues 85–95 (EESKALKAAAE) the composition is skewed to basic and acidic residues. The interval 119–442 (GKPKACYVTL…KPKNWKKFRE (324 aa)) is catalytic. A glycan (N-linked (GlcNAc...) asparagine) is linked at Asn-197. The Nucleophile role is filled by Glu-329.

Belongs to the glycosyltransferase 15 family. Mn(2+) is required as a cofactor.

The protein localises to the golgi apparatus membrane. The protein operates within protein modification; protein glycosylation. In terms of biological role, mannosyltransferase that transfers an alpha-D-mannosyl residue from GDP-mannose into lipid-linked oligosaccharide, forming an alpha-(1-&gt;2)-D-mannosyl-D-mannose linkage. Required for the attachment of the third mannose residue of O-linked saccharides. In Saccharomyces cerevisiae (strain ATCC 204508 / S288c) (Baker's yeast), this protein is Glycolipid 2-alpha-mannosyltransferase (KRE2).